A 405-amino-acid chain; its full sequence is Cytochrome P450 109 (405 aa).

Residue Cys351 coordinates heme.

This sequence belongs to the cytochrome P450 family. The cofactor is heme.

In terms of biological role, cytochromes P450 are a group of heme-thiolate monooxygenases. They oxidize a variety of structurally unrelated compounds, including steroids, fatty acids, and xenobiotics. In Bacillus spizizenii (strain ATCC 23059 / NRRL B-14472 / W23) (Bacillus subtilis subsp. spizizenii), this protein is Cytochrome P450 109 (cyp109).